Reading from the N-terminus, the 169-residue chain is Myelin basic protein (169 aa).

A1 carries the post-translational modification N-acetylalanine. Residues 1 to 114 (AAQKRPSQRS…GRGLSLSRFS (114 aa)) form a disordered region. S7 carries the phosphoserine; in C5 and C6 modification. A Phosphoserine modification is found at S10. Residue Y12 is modified to Phosphotyrosine. S17 carries the phosphoserine modification. A Phosphothreonine modification is found at T18. The residue at position 23 (R23) is a Citrulline; in form C8b. R29 carries the citrulline modification. T33 is modified (phosphothreonine). Residue S38 is modified to Phosphoserine. At R41 the chain carries Citrulline; alternate. Omega-N-methylarginine; alternate is present on R41. The interval 43–87 (FGSDRGAPKRGSGKDGHHAARTTHYGSLPQKAQGHRPQDENPVVH) is induces experimental autoimmune encephalomyelitis (EAE) 1. R47 carries the citrulline; in form C8b modification. R47 carries the post-translational modification Omega-N-methylarginine. S54 is subject to Phosphoserine; in C4, C5 and C6. R63 is subject to Citrulline. At T65 the chain carries Phosphothreonine. Position 67 is a phosphotyrosine (Y67). The residue at position 94 (T94) is a Phosphothreonine. A Citrulline; in form C2, C3, C8a and C8b modification is found at R96. T97 bears the Phosphothreonine; by MAPK; in C3, C4, C5 and C6 mark. Q102 is modified (deamidated glutamine; in form C5). R106 carries the post-translational modification Citrulline; alternate. The residue at position 106 (R106) is an Omega-N-methylarginine; alternate. Symmetric dimethylarginine; alternate is present on R106. R112 carries the citrulline modification. S114 carries the phosphoserine modification. Residues 114-122 (SWGAEGQKP) form an induces experimental autoimmune encephalomyelitis (EAE) 2 region. A Deamidated glutamine; in form C3 modification is found at Q120. Position 121 is an N6-acetyllysine (K121). At R129 the chain carries Citrulline. A disordered region spans residues 133–169 (YKSAHKGLKGHDAQGTLSKIFKLGGRDSRSGSPMARR). Q146 carries the post-translational modification Deamidated glutamine; in form C2. A Citrulline modification is found at R158. S160 carries the post-translational modification Phosphoserine; in C4 and C6. Citrulline; in form C3 is present on R161. S164 is subject to Phosphoserine; in form C3, C5 and C6. R168 and R169 each carry citrulline.

The protein belongs to the myelin basic protein family. As to quaternary structure, homodimer; self-associates in the presence of lysolipid. At least 6 charge isomers; C1 (the most cationic and least modified form), C2, C3, C4, C5 and C6 (the least cationic form); are produced as a result of optional post-translational modifications, such as phosphorylation of serine or threonine residues, deamidation of glutamine or asparagine residues, citrullination and methylation of arginine residues. In terms of processing, phosphorylated by TAOK2, VRK2, MAPK11, MAPK12, MAPK14 and MINK1. Post-translationally, proteolytically cleaved in B cell lysosomes by cathepsin CTSG which degrades the major immunogenic MBP epitope and prevents the activation of MBP-specific autoreactive T cells. In terms of tissue distribution, found in both the central and the peripheral nervous system.

It is found in the myelin membrane. Functionally, is, with PLP, the most abundant protein component of the myelin membrane in the CNS. Has a role in both the formation and stabilization of this compact multilayer arrangement of bilayers. Each splice variant and charge isomer may have a specialized function in the assembly of an optimized, biochemically functional myelin membrane. This is Myelin basic protein (MBP) from Bos taurus (Bovine).